The chain runs to 1822 residues: MSEILCQWLNKELKVSRTVSPKSFAKAFSSGYLLGEVLHKFELQDDFSEFLDSRVSSAKLNNFSRLEPTLNLLGVQFDQNVAHGIITEKPGVATKLLYQLYIALQKKKKSGLTGVEMQTMQRLTNLRLQNMKSDTFQERLRHMIPRQTDFNLMRITYRFQEKYKHVKEDLAHLHFEKLERFQKLKEEQRCFDIEKQYLNRRRQNEIMAKIQAAIIQIPKPASNRTLKALEAQKMMKKKKEAEDVADEIKKFEALIKKDLQAKESASKTSLDTAGQTTTDLLNTYSDDEYIKKIQKRLEEDAFAREQREKRRRKLLMDQLIAHEAQEEAYREEQLINRLMRQSQQERRIAVQLMHVRHEKEVLWQNRIFREKQHEERRLKDFQDALDREAALAKQAKIDFEEQFLKEKRFHDQIAVERAQARYEKHYSVCAEILDQIVDLSTKVADYRMLTNNLIPYKLMHDWKELFFNAKPIYEQASVKTLPANPSREQLTELEKRDLLDTNDYEEYKNMVGEWALPEEMVDNLPPSNNCILGHILHRLAEKSLPPRAESTTPELPSFAVKGCLLGKTLSGKTTILRSLQKDFPIQILSIDTLVQEAIQAFHDNEKVSEVLPIQKNDEEDALPVLQEEIKESQDPQHVFSAGPVSDEVLPETEGETMLSANADKTPKAEEVKSSDSFLKLTTRAQLGAKSEQLLKKGKSIPDVLLVDIIVNAINEIPVNQDCILDGFPMTLNQAQLLEEALTGCNRNLTEVERKKAQKSTLAIDPATSKEIPLPSPAFDFVILLDVSDTSSMSRMNDIIAEELSYKTAHEDISQRVAAENQDKDGDQNLRDQIQHRIIGFLDNWPLLEQWFSEPENILIKINAEIDKESLCEKVKEILTTEIAKKKNKVEKKLEEKEAEKKAAASLAELPLPTPPPAPPPEPEKEKEIHQSHVASKTPTAKGKPQSEAPHGKQESLQEGKGKKGETALKRKGSPKGKSSGGKVPVKKSPADSTDTSPVAIVPQPPKPGSEEWVYVNEPVPEEMPLFLVPYWELIENSYINTIKTVLRHLREDQHTVLAYLYEIRTSFQEFLKRPDHKQDFVAQWQADFNSLPDDLWDDEETKAELHQRVNDLRDRLWDICDARKEEAEQERLDIINESWLQDTLGMTMNHFFSLMQAELNRFQDTKRLLQDYYWGMESKIPVEDNKRFTRIPLVQLDSKDNSESQLRIPLVPRISISLETVTPKPKTKSVLKGKMDNSLENVESNFEADEKLVMDTWQQASLAVSHMVAAEIHQRLMEEEKENQPADPKEKSPQMGANKKVKKEPPKKKQEDKKPKGKSPPMAEATPVIVTTEEIAEIKRKNELRVKIKEEHLAALQFEEIATQFRLELIKTKALALLEDLVTKVVDVYKLMEKWLGERYLNEMASTEKLTDVARYHIETSTKIQNELYLSQEDFFINGNIKVFPDPPPSIRPPPVEKEEDGTLTIEQLDSLRDQFLDMAPKGIIGNKAFTDILIDLVTLNLGTNNFPSNWMHLTQPELQELTSLLTVNSEFVDWRKFLLVTSMPWPIPLEEELLETLQKFKAVDKEQLGTITFEQYMQAGLWFTGDEDIKIPENPLEPLPFNRQEHLIEFFFRLFADYEKDPPQLDYTQMLLYFACHPDTVEGVYRALSVAVGTHVFQQVKASIPSAEKTSSTDAGPAEEFPEPEENAAREERKLKDDTEKREQKDEEIPENANNEKMSMETLLKVFKGGSEAQDSNRFASHLKIENIYAEGFIKTFQDLGAKNLEPIEVAVLLKHPFIQDLISNYSDYKFPDIKIILQRSEHVQGSDGERSPSRHTEEKK.

A Calponin-homology (CH) domain is found at 1–105 (MSEILCQWLN…LLYQLYIALQ (105 aa)). Coiled coils occupy residues 227-260 (KALEAQKMMKKKKEAEDVADEIKKFEALIKKDLQ), 321-396 (AHEA…KQAK), 732-758 (NQAQLLEEALTGCNRNLTEVERKKAQK), and 871-909 (CEKVKEILTTEIAKKKNKVEKKLEEKEAEKKAAASLAEL). 4 disordered regions span residues 896-1004 (KEAE…VPQP), 1278-1327 (EEEK…EATP), 1664-1718 (SIPS…NNEK), and 1803-1822 (EHVQGSDGERSPSRHTEEKK). Residues 911–920 (LPTPPPAPPP) show a composition bias toward pro residues. Composition is skewed to basic and acidic residues over residues 921-930 (EPEKEKEIHQ) and 949-968 (PHGKQESLQEGKGKKGETAL). Positions 975-987 (KGKSSGGKVPVKK) are enriched in low complexity. Basic and acidic residues-rich tracts occupy residues 1278–1292 (EEEKENQPADPKEKS) and 1303–1314 (KEPPKKKQEDKK). The interaction with IFT20 stretch occupies residues 1324–1676 (EATPVIVTTE…SAEKTSSTDA (353 aa)). Residues 1686 to 1712 (EENAAREERKLKDDTEKREQKDEEIPE) adopt a coiled-coil conformation. The span at 1688–1708 (NAAREERKLKDDTEKREQKDE) shows a compositional bias: basic and acidic residues.

As to quaternary structure, interacts (via C-terminus) with IFT20. Interacts with DYNC1I2.

The protein localises to the cell projection. The protein resides in the cilium. It is found in the flagellum. It localises to the cytoplasm. Its subcellular location is the golgi apparatus. Functionally, required for correct axoneme development in spermatozoa. Important for normal development of the manchette and sperm head morphology. Essential for male fertility. Plays a role in localization of the intraflagellar transport protein IFT20 to the manchette, suggesting function as an adapter for dynein-mediated protein transport during spermatogenesis. Also plays a role in bone growth where it seems to be required for normal osteoblast differentiation. This is Sperm flagellar protein 2 (SPEF2) from Homo sapiens (Human).